The chain runs to 484 residues: Ribosomal RNA small subunit methyltransferase F (484 aa).

Residues alanine 119–lysine 125, glutamate 143, aspartate 170, and aspartate 188 contribute to the S-adenosyl-L-methionine site. The active-site Nucleophile is cysteine 241.

Belongs to the class I-like SAM-binding methyltransferase superfamily. RsmB/NOP family.

It is found in the cytoplasm. It carries out the reaction cytidine(1407) in 16S rRNA + S-adenosyl-L-methionine = 5-methylcytidine(1407) in 16S rRNA + S-adenosyl-L-homocysteine + H(+). Its function is as follows. Specifically methylates the cytosine at position 1407 (m5C1407) of 16S rRNA. The polypeptide is Ribosomal RNA small subunit methyltransferase F (Shewanella frigidimarina (strain NCIMB 400)).